The following is a 352-amino-acid chain: Protein TIFY 6B (352 aa).

The disordered stretch occupies residues 1–71 (MERDFLGLGS…KSGNYHLPHS (71 aa)). Residues 17–26 (VKEETSESSR) are compositionally biased toward basic and acidic residues. Over residues 34 to 54 (MNWSFSNKVSASSSQFLSFRP) the composition is skewed to polar residues. In terms of domain architecture, Tify spans 172-207 (PIGSPAQLTIFYAGSVCVYDDISPEKAKAIMLLAGN). The Jas signature appears at 302 to 326 (PLARKASLARFLEKRKERVTSVSPY). Positions 304–311 (ARKASLAR) match the Nuclear localization signal motif.

This sequence belongs to the TIFY/JAZ family. Homo- and heterodimer. Interacts with COI1, MYC2, MYC3, MYC4, TIFY10A/JAZ1, TIFY10B/JAZ2, TIFY6A/JAZ4, TIFY5A/JAZ8, TIFY7/JAZ9, TIFY9/JAZ10 and TIFY3A/JAZ11. Interacts (via TIFY domain) with AFPH2/NINJA. In terms of processing, ubiquitinated. Targeted for degradation by the SCF(COI1) E3 ubiquitin ligase-proteasome pathway during jasmonate signaling. As to expression, srtongly expressed in root tips.

The protein resides in the nucleus. Repressor of jasmonate responses. Jasmonoyl-isoleucine (JA-Ile) specifically promotes COI1-TIFY6B/JAZ3 interaction. Acts as a negative regulator of MYC2 function. Feed-back regulated by MYC2. In Arabidopsis thaliana (Mouse-ear cress), this protein is Protein TIFY 6B (TIFY6B).